The following is a 40-amino-acid chain: MKVRNSLSALKKVPGAQIVRRRGRTFVINKLNPRMKARQG.

This sequence belongs to the bacterial ribosomal protein bL36 family.

This is Large ribosomal subunit protein bL36A from Renibacterium salmoninarum (strain ATCC 33209 / DSM 20767 / JCM 11484 / NBRC 15589 / NCIMB 2235).